Reading from the N-terminus, the 142-residue chain is Galactose-binding lectin l-1 (142 aa).

The Galectin domain occupies 3–134 (FVEVKNLIMK…DATVKNISVN (132 aa)). A beta-D-galactoside is bound at residue 68–74 (WQEEQRD). N130 carries N-linked (GlcNAc...) asparagine glycosylation.

In terms of assembly, homodimer. In terms of processing, the N-terminus is blocked. As to expression, skin; highest expression in that of individuals showing resistance to infectious disease.

Its subcellular location is the secreted. Involved in host defense at the body surface. Causes agglutination of the Gram-positive bacterium S.difficile. Possesses calcium-independent hemagglutinating activity. The chain is Galactose-binding lectin l-1 from Anguilla japonica (Japanese eel).